Here is a 217-residue protein sequence, read N- to C-terminus: Somatotropin (217 aa).

The N-terminal stretch at 1–26 (MATGSRTSLLLAFGLLCLPWLQEGSA) is a signal peptide. H44 lines the Zn(2+) pocket. C79 and C191 are joined by a disulfide. S132 is subject to Phosphoserine. Q163 carries the post-translational modification Deamidated glutamine; by deterioration. S176 is modified (phosphoserine). Residue N178 is modified to Deamidated asparagine; by deterioration. E200 lines the Zn(2+) pocket. The cysteines at positions 208 and 215 are disulfide-linked.

It belongs to the somatotropin/prolactin family. Monomer, dimer, trimer, tetramer and pentamer, disulfide-linked or non-covalently associated, in homomeric and heteromeric combinations. Can also form a complex either with GHBP or with the alpha2-macroglobulin complex.

The protein resides in the secreted. Its function is as follows. Plays an important role in growth control. Its major role in stimulating body growth is to stimulate the liver and other tissues to secrete IGF1. It stimulates both the differentiation and proliferation of myoblasts. It also stimulates amino acid uptake and protein synthesis in muscle and other tissues. This chain is Somatotropin (GH1), found in Homo sapiens (Human).